The sequence spans 350 residues: Cobalt-precorrin-5B C(1)-methyltransferase (350 aa).

The protein belongs to the CbiD family.

The catalysed reaction is Co-precorrin-5B + S-adenosyl-L-methionine = Co-precorrin-6A + S-adenosyl-L-homocysteine. The protein operates within cofactor biosynthesis; adenosylcobalamin biosynthesis; cob(II)yrinate a,c-diamide from sirohydrochlorin (anaerobic route): step 6/10. Its function is as follows. Catalyzes the methylation of C-1 in cobalt-precorrin-5B to form cobalt-precorrin-6A. In Syntrophotalea carbinolica (strain DSM 2380 / NBRC 103641 / GraBd1) (Pelobacter carbinolicus), this protein is Cobalt-precorrin-5B C(1)-methyltransferase.